A 592-amino-acid chain; its full sequence is Aspartate--tRNA ligase (592 aa).

Glutamate 173 contributes to the L-aspartate binding site. Residues 197 to 200 are aspartate; it reads QLFK. Residue arginine 219 participates in L-aspartate binding. ATP contacts are provided by residues 219 to 221 and glutamine 228; that span reads RDE. Histidine 448 is an L-aspartate binding site. Position 482 (glutamate 482) interacts with ATP. Arginine 489 contributes to the L-aspartate binding site. 534–537 contacts ATP; that stretch reads GLDR.

It belongs to the class-II aminoacyl-tRNA synthetase family. Type 1 subfamily. In terms of assembly, homodimer.

The protein resides in the cytoplasm. The enzyme catalyses tRNA(Asp) + L-aspartate + ATP = L-aspartyl-tRNA(Asp) + AMP + diphosphate. Catalyzes the attachment of L-aspartate to tRNA(Asp) in a two-step reaction: L-aspartate is first activated by ATP to form Asp-AMP and then transferred to the acceptor end of tRNA(Asp). This Shewanella baltica (strain OS155 / ATCC BAA-1091) protein is Aspartate--tRNA ligase.